A 380-amino-acid chain; its full sequence is Lipid-A-disaccharide synthase (380 aa).

The protein belongs to the LpxB family.

The catalysed reaction is a lipid X + a UDP-2-N,3-O-bis[(3R)-3-hydroxyacyl]-alpha-D-glucosamine = a lipid A disaccharide + UDP + H(+). It functions in the pathway bacterial outer membrane biogenesis; LPS lipid A biosynthesis. Condensation of UDP-2,3-diacylglucosamine and 2,3-diacylglucosamine-1-phosphate to form lipid A disaccharide, a precursor of lipid A, a phosphorylated glycolipid that anchors the lipopolysaccharide to the outer membrane of the cell. This chain is Lipid-A-disaccharide synthase, found in Pseudomonas syringae pv. syringae (strain B728a).